A 274-amino-acid polypeptide reads, in one-letter code: Nickel/cobalt efflux system RcnA (274 aa).

Residues 1–12 (MTEFTTLLQQGN) are Periplasmic-facing. The helical transmembrane segment at 13–33 (AWFFIPSAILLGALHGLEPGH) threads the bilayer. Residues 34-56 (SKTMMAAFIIAIKGTIKQAVMLG) are Cytoplasmic-facing. The helical transmembrane segment at 57 to 77 (LAATISHTAVVWLIAFGGMVI) threads the bilayer. Residues 78–86 (SKRFTAQSA) lie on the Periplasmic side of the membrane. Residues 87–107 (EPWLQLISAVIIISTAFWMFW) form a helical membrane-spanning segment. Over 108–174 (RTWRGERNWL…FDGREVTNWQ (67 aa)) the chain is Cytoplasmic. Residues 127-137 (HHHHDHEDHHD) show a composition bias toward basic and acidic residues. A disordered region spans residues 127 to 153 (HHHHDHEDHHDHGHHHHHEHGEYQDAH). The chain crosses the membrane as a helical span at residues 175-195 (ILLFGLTGGLIPCPAAITVLL). Over 196 to 209 (ICIQLKALTLGATL) the chain is Periplasmic. A helical transmembrane segment spans residues 210 to 230 (VVSFSLGLALTLVTVGVGAAI). At 231–251 (SVQQVAKRWSGFNTLAKRAPY) the chain is on the cytoplasmic side. A helical transmembrane segment spans residues 252 to 272 (FSSLLIGLVGVYMGVHGFMGI). Over 273-274 (MR) the chain is Periplasmic.

It belongs to the NiCoT transporter (TC 2.A.52) family. RcnA subfamily.

The protein localises to the cell inner membrane. Efflux system for nickel and cobalt. The polypeptide is Nickel/cobalt efflux system RcnA (rcnA) (Escherichia coli O1:K1 / APEC).